A 71-amino-acid chain; its full sequence is Large ribosomal subunit protein uL30 (71 aa).

It belongs to the universal ribosomal protein uL30 family. Part of the 50S ribosomal subunit.

This chain is Large ribosomal subunit protein uL30, found in Mycolicibacterium paratuberculosis (strain ATCC BAA-968 / K-10) (Mycobacterium paratuberculosis).